A 1190-amino-acid polypeptide reads, in one-letter code: Serine/threonine-protein kinase N (1190 aa).

3 consecutive REM-1 domains span residues 28–102 (NLPE…QILL), 142–219 (ALEG…NREQ), and 242–322 (SSQP…ELPA). The C2 domain maps to 359–515 (LGGKPYQSVS…MALQLEPQGL (157 aa)). Residues 395-404 (PGRSRRDKDN) are compositionally biased toward basic and acidic residues. Disordered regions lie at residues 395–415 (PGRS…RSFV), 572–715 (HVHM…PPPP), 757–787 (PATP…QPPQ), and 811–832 (SPSS…RNVA). 2 stretches are compositionally biased toward low complexity: residues 576–588 (GSAG…TGSS) and 767–787 (AAAG…QPPQ). The region spanning 863–1122 (FRLLSVLGRG…AEDVKKQAFF (260 aa)) is the Protein kinase domain. Residues 869-877 (LGRGHFGKV) and K892 contribute to the ATP site. D988 serves as the catalytic Proton acceptor. The region spanning 1123 to 1190 (RSIVWDDLLL…QDFSYTAEWC (68 aa)) is the AGC-kinase C-terminal domain.

The protein belongs to the protein kinase superfamily. Ser/Thr protein kinase family. In terms of assembly, interacts (via N-terminus) with Rho1 (via REM repeats), Rac1 (via REM 1 repeat) and Rac2. Post-translationally, phosphorylated. Autophosphorylated; autophosphorylation is stimulated by GTP-bound Rho/Rac GTPases.

The protein localises to the cytoplasm. It localises to the nucleus. Its subcellular location is the membrane. The protein resides in the cell projection. It is found in the lamellipodium. The protein localises to the cytoskeleton. It localises to the cleavage furrow. Its subcellular location is the midbody. The protein resides in the cell junction. It catalyses the reaction L-seryl-[protein] + ATP = O-phospho-L-seryl-[protein] + ADP + H(+). The catalysed reaction is L-threonyl-[protein] + ATP = O-phospho-L-threonyl-[protein] + ADP + H(+). Activated by lipids, particularly cardiolipin and to a lesser extent by other acidic phospholipids and unsaturated fatty acids. Two specific sites, Thr-1022 (activation loop of the kinase domain) and Thr-1164 (turn motif), may be needed to be phosphorylated for its full activation. Kinase activity is activated upon binding to GTP-bound Rho/Rac GTPases. In terms of biological role, pkc-related serine/threonine-protein kinase and Rho/Rac effector protein that participates in specific signal transduction responses in the cell. May play a role in the regulation of cell cycle progression, actin cytoskeleton assembly, cell migration, cell adhesion and transcription activation signaling processes. Plays a role in regulating Rho-mediated dorsal closure during embryogenesis. The chain is Serine/threonine-protein kinase N (Pkn) from Drosophila melanogaster (Fruit fly).